Consider the following 51-residue polypeptide: Large ribosomal subunit protein eL39 (51 aa).

Belongs to the eukaryotic ribosomal protein eL39 family.

This Methanopyrus kandleri (strain AV19 / DSM 6324 / JCM 9639 / NBRC 100938) protein is Large ribosomal subunit protein eL39.